Reading from the N-terminus, the 660-residue chain is Zeaxanthin epoxidase, chloroplastic (660 aa).

The transit peptide at 1–49 (MYASSARDGIPGKWCNARRKQLPLLISKDFPAELYHSLPCKSLENGHIK) directs the protein to the chloroplast. FAD contacts are provided by residues 79-107 (KVLV…LVFE) and 357-370 (TFSW…LLGD). The FHA domain maps to 545–609 (LVLSRDENMP…HGTWFIDNEG (65 aa)).

Requires FAD as cofactor.

The protein localises to the plastid. It localises to the chloroplast membrane. It is found in the chloroplast thylakoid membrane. It carries out the reaction all-trans-zeaxanthin + 4 reduced [2Fe-2S]-[ferredoxin] + 2 O2 + 4 H(+) = all-trans-violaxanthin + 4 oxidized [2Fe-2S]-[ferredoxin] + 2 H2O. The enzyme catalyses all-trans-zeaxanthin + 2 reduced [2Fe-2S]-[ferredoxin] + O2 + 2 H(+) = all-trans-antheraxanthin + 2 oxidized [2Fe-2S]-[ferredoxin] + H2O. It catalyses the reaction all-trans-antheraxanthin + 2 reduced [2Fe-2S]-[ferredoxin] + O2 + 2 H(+) = all-trans-violaxanthin + 2 oxidized [2Fe-2S]-[ferredoxin] + H2O. The catalysed reaction is beta-cryptoxanthin + 2 reduced [2Fe-2S]-[ferredoxin] + O2 + 2 H(+) = (5R,6S)-5,6-epoxi-beta-cryptoxanthin + 2 oxidized [2Fe-2S]-[ferredoxin] + H2O. It functions in the pathway plant hormone biosynthesis; abscisate biosynthesis. In terms of biological role, converts zeaxanthin into antheraxanthin and subsequently violaxanthin. Also acts on beta-cryptoxanthin. Involved in the epoxidation of zeaxanthin. This chain is Zeaxanthin epoxidase, chloroplastic, found in Capsicum annuum (Capsicum pepper).